A 440-amino-acid chain; its full sequence is Proline--tRNA ligase (440 aa).

This sequence belongs to the class-II aminoacyl-tRNA synthetase family. ProS type 2 subfamily. In terms of assembly, homodimer.

The protein localises to the cytoplasm. The catalysed reaction is tRNA(Pro) + L-proline + ATP = L-prolyl-tRNA(Pro) + AMP + diphosphate. Functionally, catalyzes the attachment of proline to tRNA(Pro) in a two-step reaction: proline is first activated by ATP to form Pro-AMP and then transferred to the acceptor end of tRNA(Pro). In Rhizobium etli (strain ATCC 51251 / DSM 11541 / JCM 21823 / NBRC 15573 / CFN 42), this protein is Proline--tRNA ligase.